The chain runs to 30 residues: Small toxic protein BsrE (30 aa).

Residues 4 to 24 form a helical membrane-spanning segment; sequence FQALMLMLAIGSFIIALLTYI.

Its subcellular location is the cell membrane. Functionally, toxic component of a type I toxin-antitoxin (TA) system; overexpression in the absence of cognate antisense antitoxin SR5 RNA leads to cell lysis. Base pairing occurs between the 3' UTRs of bsrE mRNA and SR5 RNA which leads to bsrE mRNA degradation initiated by RNase III (rnc) and RNase J1 (rnjA). Genetic evidence suggests an unidentified RNA-binding protein may exist that promotes TA RNA interaction. The protein is Small toxic protein BsrE of Bacillus subtilis (strain 168).